The primary structure comprises 157 residues: Endoribonuclease YbeY (157 aa).

Residues His-111, His-115, and His-121 each contribute to the Zn(2+) site. Residues 136-157 (ELLAELGHPDPYADDETDSITH) are disordered. Positions 147-157 (YADDETDSITH) are enriched in acidic residues.

Belongs to the endoribonuclease YbeY family. The cofactor is Zn(2+).

It localises to the cytoplasm. Functionally, single strand-specific metallo-endoribonuclease involved in late-stage 70S ribosome quality control and in maturation of the 3' terminus of the 16S rRNA. This is Endoribonuclease YbeY from Pseudomonas putida (strain ATCC 700007 / DSM 6899 / JCM 31910 / BCRC 17059 / LMG 24140 / F1).